Consider the following 330-residue polypeptide: T-cell surface glycoprotein CD1b4 (330 aa).

An N-terminal signal peptide occupies residues 1–15 (MLLLALAFFFPAGDT). The Extracellular portion of the chain corresponds to 16–299 (QNVLPGKISF…LYWGHSISIG (284 aa)). 3 N-linked (GlcNAc...) asparagine glycosylation sites follow: asparagine 35, asparagine 72, and asparagine 143. 2 cysteine pairs are disulfide-bonded: cysteine 117/cysteine 181 and cysteine 221/cysteine 276. Residues 182-292 (PRYLMSVIEA…LEGQDIILYW (111 aa)) enclose the Ig-like domain. Residues 300-320 (WIILAVLVPCLIVLVLFILWF) form a helical membrane-spanning segment. The Cytoplasmic segment spans residues 321-330 (YRRWSYEDIF). The Internalization signal motif lies at 326–329 (YEDI).

In terms of assembly, heterodimer with B2M (beta-2-microglobulin). Interacts with saposin C.

The protein resides in the cell membrane. Its subcellular location is the endosome membrane. The protein localises to the lysosome membrane. Its function is as follows. Antigen-presenting protein that binds self and non-self lipid and glycolipid antigens and presents them to T-cell receptors on natural killer T-cells. This is T-cell surface glycoprotein CD1b4 (CD1B4) from Cavia porcellus (Guinea pig).